A 236-amino-acid polypeptide reads, in one-letter code: EF-hand domain-containing protein D1 (236 aa).

The disordered stretch occupies residues 1–48 (MASEELASKLQRRLQWEEGDSGLQPAPGAAPDPEPQPQPPAWAPTARA). Residues 28–42 (GAAPDPEPQPQPPAW) show a composition bias toward pro residues. 2 consecutive EF-hand domains span residues 87-122 (RLIK…LGAP) and 123-158 (QTHL…AAAG). Ca(2+) is bound by residues aspartate 100, aspartate 104, glutamate 111, aspartate 136, aspartate 138, aspartate 140, lysine 142, and glutamate 147.

It localises to the mitochondrion inner membrane. Acts as a calcium sensor for mitochondrial flash (mitoflash) activation, an event characterized by stochastic bursts of superoxide production. May play a role in neuronal differentiation. The polypeptide is EF-hand domain-containing protein D1 (EFHD1) (Bos taurus (Bovine)).